Reading from the N-terminus, the 1260-residue chain is UPF0507 protein LELG_01076 (1260 aa).

Residues 336-493 (ADYDPSATKV…LSDNDKGLNT (158 aa)) form the VPS9 domain.

Belongs to the UPF0507 family.

The sequence is that of UPF0507 protein LELG_01076 from Lodderomyces elongisporus (strain ATCC 11503 / CBS 2605 / JCM 1781 / NBRC 1676 / NRRL YB-4239) (Yeast).